Here is a 60-residue protein sequence, read N- to C-terminus: Large ribosomal subunit protein bL32 (60 aa).

The disordered stretch occupies residues 1-60; that stretch reads MAVQQNKKSPSKRGMHRSHDFLVNPSTAIEPTTGETHLRHHISPNGFYRGRKVLKTKADE. A compositionally biased stretch (polar residues) spans 24 to 35; the sequence is NPSTAIEPTTGE. Residues 49 to 60 show a composition bias toward basic residues; that stretch reads RGRKVLKTKADE.

It belongs to the bacterial ribosomal protein bL32 family.

This Bordetella petrii (strain ATCC BAA-461 / DSM 12804 / CCUG 43448) protein is Large ribosomal subunit protein bL32.